The following is a 158-amino-acid chain: NADPH-dependent 7-cyano-7-deazaguanine reductase (158 aa).

The active-site Thioimide intermediate is the Cys56. The active-site Proton donor is Asp63. Residues 78–80 (VES) and 97–98 (HE) each bind substrate.

This sequence belongs to the GTP cyclohydrolase I family. QueF type 1 subfamily.

It localises to the cytoplasm. It catalyses the reaction 7-aminomethyl-7-carbaguanine + 2 NADP(+) = 7-cyano-7-deazaguanine + 2 NADPH + 3 H(+). It participates in tRNA modification; tRNA-queuosine biosynthesis. Its function is as follows. Catalyzes the NADPH-dependent reduction of 7-cyano-7-deazaguanine (preQ0) to 7-aminomethyl-7-deazaguanine (preQ1). In Rhodopseudomonas palustris (strain HaA2), this protein is NADPH-dependent 7-cyano-7-deazaguanine reductase.